A 628-amino-acid chain; its full sequence is 69 kDa protein (628 aa).

Disordered stretches follow at residues 1-24, 141-492, and 537-628; these read MSNG…LSAS, HFHA…SDPV, and VLPT…PDTD. Polar residues-rich tracts occupy residues 166–178 and 295–305; these read RTSV…TTRG and TGHIPSTTASR. Residues 433 to 451 show a composition bias toward pro residues; the sequence is EGPPPPPRRLPSPATPPQS. Residues 586 to 596 are compositionally biased toward polar residues; it reads PSGPLRSQSPS.

The protein belongs to the tymoviridae protein p69 family.

Functionally, acts as a suppressor of RNA-mediated gene silencing, also known as post-transcriptional gene silencing (PTGS), a mechanism of plant viral defense that limits the accumulation of viral RNAs. The chain is 69 kDa protein from Turnip yellow mosaic virus (isolate Australia).